A 320-amino-acid chain; its full sequence is Cytochrome f (320 aa).

An N-terminal signal peptide occupies residues 1–35; that stretch reads MQNRNTFSWVKDQMSRFISVSIMIYVITRTSISNA. Y36, C56, C59, and H60 together coordinate heme. The helical transmembrane segment at 286–306 threads the bilayer; sequence VQGLLFFFASVILAQIFLVLK.

This sequence belongs to the cytochrome f family. In terms of assembly, the 4 large subunits of the cytochrome b6-f complex are cytochrome b6, subunit IV (17 kDa polypeptide, petD), cytochrome f and the Rieske protein, while the 4 small subunits are PetG, PetL, PetM and PetN. The complex functions as a dimer. The cofactor is heme.

The protein localises to the plastid. It localises to the chloroplast thylakoid membrane. Component of the cytochrome b6-f complex, which mediates electron transfer between photosystem II (PSII) and photosystem I (PSI), cyclic electron flow around PSI, and state transitions. In Ceratophyllum demersum (Rigid hornwort), this protein is Cytochrome f.